An 87-amino-acid polypeptide reads, in one-letter code: uncharacterized protein (87 aa).

To H.pylori HP0495/JHP0447.

This is an uncharacterized protein from Campylobacter jejuni subsp. jejuni serotype O:2 (strain ATCC 700819 / NCTC 11168).